The chain runs to 223 residues: Phosphoribosylformylglycinamidine synthase subunit PurQ (223 aa).

Residues 2-223 (KFAVIQFPGS…ASVLKNFVGK (222 aa)) form the Glutamine amidotransferase type-1 domain. The Nucleophile role is filled by C86. Catalysis depends on residues H195 and E197.

Part of the FGAM synthase complex composed of 1 PurL, 1 PurQ and 2 PurS subunits.

The protein localises to the cytoplasm. It carries out the reaction N(2)-formyl-N(1)-(5-phospho-beta-D-ribosyl)glycinamide + L-glutamine + ATP + H2O = 2-formamido-N(1)-(5-O-phospho-beta-D-ribosyl)acetamidine + L-glutamate + ADP + phosphate + H(+). The catalysed reaction is L-glutamine + H2O = L-glutamate + NH4(+). Its pathway is purine metabolism; IMP biosynthesis via de novo pathway; 5-amino-1-(5-phospho-D-ribosyl)imidazole from N(2)-formyl-N(1)-(5-phospho-D-ribosyl)glycinamide: step 1/2. Part of the phosphoribosylformylglycinamidine synthase complex involved in the purines biosynthetic pathway. Catalyzes the ATP-dependent conversion of formylglycinamide ribonucleotide (FGAR) and glutamine to yield formylglycinamidine ribonucleotide (FGAM) and glutamate. The FGAM synthase complex is composed of three subunits. PurQ produces an ammonia molecule by converting glutamine to glutamate. PurL transfers the ammonia molecule to FGAR to form FGAM in an ATP-dependent manner. PurS interacts with PurQ and PurL and is thought to assist in the transfer of the ammonia molecule from PurQ to PurL. The polypeptide is Phosphoribosylformylglycinamidine synthase subunit PurQ (Lactococcus lactis subsp. lactis (strain IL1403) (Streptococcus lactis)).